The primary structure comprises 181 residues: Crossover junction endodeoxyribonuclease RuvC (181 aa).

Catalysis depends on residues Asp7, Glu67, and Asp139. The Mg(2+) site is built by Asp7, Glu67, and Asp139.

The protein belongs to the RuvC family. Homodimer which binds Holliday junction (HJ) DNA. The HJ becomes 2-fold symmetrical on binding to RuvC with unstacked arms; it has a different conformation from HJ DNA in complex with RuvA. In the full resolvosome a probable DNA-RuvA(4)-RuvB(12)-RuvC(2) complex forms which resolves the HJ. Mg(2+) serves as cofactor.

The protein localises to the cytoplasm. The enzyme catalyses Endonucleolytic cleavage at a junction such as a reciprocal single-stranded crossover between two homologous DNA duplexes (Holliday junction).. The RuvA-RuvB-RuvC complex processes Holliday junction (HJ) DNA during genetic recombination and DNA repair. Endonuclease that resolves HJ intermediates. Cleaves cruciform DNA by making single-stranded nicks across the HJ at symmetrical positions within the homologous arms, yielding a 5'-phosphate and a 3'-hydroxyl group; requires a central core of homology in the junction. The consensus cleavage sequence is 5'-(A/T)TT(C/G)-3'. Cleavage occurs on the 3'-side of the TT dinucleotide at the point of strand exchange. HJ branch migration catalyzed by RuvA-RuvB allows RuvC to scan DNA until it finds its consensus sequence, where it cleaves and resolves the cruciform DNA. The protein is Crossover junction endodeoxyribonuclease RuvC of Cupriavidus pinatubonensis (strain JMP 134 / LMG 1197) (Cupriavidus necator (strain JMP 134)).